The chain runs to 175 residues: SsrA-binding protein (175 aa).

This sequence belongs to the SmpB family.

The protein localises to the cytoplasm. Functionally, required for rescue of stalled ribosomes mediated by trans-translation. Binds to transfer-messenger RNA (tmRNA), required for stable association of tmRNA with ribosomes. tmRNA and SmpB together mimic tRNA shape, replacing the anticodon stem-loop with SmpB. tmRNA is encoded by the ssrA gene; the 2 termini fold to resemble tRNA(Ala) and it encodes a 'tag peptide', a short internal open reading frame. During trans-translation Ala-aminoacylated tmRNA acts like a tRNA, entering the A-site of stalled ribosomes, displacing the stalled mRNA. The ribosome then switches to translate the ORF on the tmRNA; the nascent peptide is terminated with the 'tag peptide' encoded by the tmRNA and targeted for degradation. The ribosome is freed to recommence translation, which seems to be the essential function of trans-translation. The chain is SsrA-binding protein from Prochlorococcus marinus subsp. pastoris (strain CCMP1986 / NIES-2087 / MED4).